The primary structure comprises 140 residues: 3-hydroxyacyl-[acyl-carrier-protein] dehydratase FabZ (140 aa).

Residue His-47 is part of the active site.

Belongs to the thioester dehydratase family. FabZ subfamily.

The protein resides in the cytoplasm. The catalysed reaction is a (3R)-hydroxyacyl-[ACP] = a (2E)-enoyl-[ACP] + H2O. Involved in unsaturated fatty acids biosynthesis. Catalyzes the dehydration of short chain beta-hydroxyacyl-ACPs and long chain saturated and unsaturated beta-hydroxyacyl-ACPs. The sequence is that of 3-hydroxyacyl-[acyl-carrier-protein] dehydratase FabZ from Streptococcus mutans serotype c (strain ATCC 700610 / UA159).